We begin with the raw amino-acid sequence, 1192 residues long: DNA ligase 1 (1192 aa).

2 disordered regions span residues 29-257 and 280-517; these read ELNK…KEKE and EKEL…KSTQ. Residues 42-56 show a composition bias toward basic and acidic residues; sequence EAVVKEKVEKKEKKE. Residues 70–113 are compositionally biased toward acidic residues; that stretch reads EEEEEEQEEQDGEEEQEEEEEYQQQDEEIEEDINGEEEMELDEN. A compositionally biased stretch (basic and acidic residues) spans 141-155; that stretch reads KTIENKETKKPEKQS. Residues 172–198 are compositionally biased toward acidic residues; it reads DDEEDEEDENKTDDNDLDDMLDDDSDN. Composition is skewed to basic and acidic residues over residues 199–257 and 280–368; these read EKDS…KEKE and EKEL…RANA. Composition is skewed to low complexity over residues 371–382 and 410–434; these read KSSVPTSTSKNS and STTT…ISSP. The segment covering 435 to 467 has biased composition (basic and acidic residues); the sequence is SKKEEKEVITSKKQVEATKVEVKKEKEKEKEKE. Residues 468-511 are compositionally biased toward acidic residues; that stretch reads KEDDEEEEEEEEDDDEKLEDIDEEEYEEEEEEDEEGISENEEEE. The tract at residues 724-733 is interaction with target DNA; sequence KLRIGLAERS. Residue Glu-842 coordinates ATP. Catalysis depends on Lys-844, which acts as the N6-AMP-lysine intermediate. Positions 849 and 865 each coordinate ATP. Glu-897 is a Mg(2+) binding site. An interaction with target DNA region spans residues 918–920; sequence ARK. Position 996 (Glu-996) interacts with Mg(2+). 3 residues coordinate ATP: Lys-1001, Arg-1014, and Lys-1020. The interval 1157–1192 is disordered; sequence DKSPEDATSSDQVVDMYQNQKINSQSSKINEKDEDY. The span at 1162 to 1184 shows a compositional bias: polar residues; it reads DATSSDQVVDMYQNQKINSQSSK.

Belongs to the ATP-dependent DNA ligase family. Requires Mg(2+) as cofactor.

Its subcellular location is the nucleus. The catalysed reaction is ATP + (deoxyribonucleotide)n-3'-hydroxyl + 5'-phospho-(deoxyribonucleotide)m = (deoxyribonucleotide)n+m + AMP + diphosphate.. Functionally, DNA ligase that seals nicks in double-stranded DNA during DNA replication, DNA recombination and DNA repair. The sequence is that of DNA ligase 1 (lig1) from Dictyostelium discoideum (Social amoeba).